The sequence spans 186 residues: Elongation factor P (186 aa).

It belongs to the elongation factor P family.

It is found in the cytoplasm. Its pathway is protein biosynthesis; polypeptide chain elongation. In terms of biological role, involved in peptide bond synthesis. Stimulates efficient translation and peptide-bond synthesis on native or reconstituted 70S ribosomes in vitro. Probably functions indirectly by altering the affinity of the ribosome for aminoacyl-tRNA, thus increasing their reactivity as acceptors for peptidyl transferase. The sequence is that of Elongation factor P from Synechococcus sp. (strain RCC307).